We begin with the raw amino-acid sequence, 798 residues long: Bromodomain-containing protein 2 (798 aa).

The residue at position 1 (Met1) is an N-acetylmethionine. The interval 1-21 (MLQNVTPHKLPGEGNAGLLGL) is disordered. Thr6 bears the Phosphothreonine mark. Position 36 is a phosphoserine (Ser36). The interval 53–72 (LQLAPANPPPPEVSNPKKPG) is disordered. A Bromo 1 domain is found at 73–179 (RVTNQLQYLH…KIFLQKVASM (107 aa)). Asp111, Tyr154, Asn155, Lys156, Asp159, and Asp160 together coordinate a protein. Disordered stretches follow at residues 267 to 348 (PPAQ…LSEQ), 454 to 645 (DEPL…YDEK), and 736 to 798 (KRLQ…SDSG). Over residues 284 to 297 (TTTPTPTAILAPGS) the composition is skewed to low complexity. Phosphoserine occurs at positions 297, 300, and 304. Basic and acidic residues predominate over residues 315-331 (MRRESGRPIKPPRKDLP). The Bromo 2 domain maps to 343–452 (GKLSEQLKHC…DVFEFRYAKM (110 aa)). Over residues 480–512 (SSEESSSESSSEEEEEEEEDEDEEESESSDSEE) the composition is skewed to acidic residues. Basic residues predominate over residues 542–564 (KPKRKREKKEKKKKRKAEKHRGR). The short motif at 553-557 (KKKRK) is the Nuclear localization signal element. In terms of domain architecture, NET spans 630–712 (DSEEEEESRP…SCLRKKPRKP (83 aa)). Phosphoserine is present on Ser631. Over residues 772–792 (SASSSSSDSSSSSSSSSSSDT) the composition is skewed to low complexity.

Belongs to the BET family. As to quaternary structure, homodimer. Interacts with E2F1. Interacts with (acetylated) STAT3; promoting STAT3 recruitment to chromatin. Interacts with CTCF; promoting BRD2 recruitment to chromatin. As to expression, predominantly expressed in the testis, followed by ovary, placenta, embryo and to a lower extent in somatic tissues.

The protein localises to the nucleus. The protein resides in the chromosome. In terms of biological role, chromatin reader protein that specifically recognizes and binds histone H4 acetylated at 'Lys-5' and 'Lys-12' (H4K5ac and H4K12ac, respectively), thereby controlling gene expression and remodeling chromatin structures. Recruits transcription factors and coactivators to target gene sites, and activates RNA polymerase II machinery for transcriptional elongation. Plays a key role in genome compartmentalization via its association with CTCF and cohesin: recruited to chromatin by CTCF and promotes formation of topologically associating domains (TADs) via its ability to bind acetylated histones, contributing to CTCF boundary formation and enhancer insulation. Also recognizes and binds acetylated non-histone proteins, such as STAT3. Involved in inflammatory response by regulating differentiation of naive CD4(+) T-cells into T-helper Th17: recognizes and binds STAT3 acetylated at 'Lys-87', promoting STAT3 recruitment to chromatin. In addition to acetylated lysines, also recognizes and binds lysine residues on histones that are both methylated and acetylated on the same side chain to form N6-acetyl-N6-methyllysine (Kacme), an epigenetic mark of active chromatin associated with increased transcriptional initiation. Specifically binds histone H4 acetyl-methylated at 'Lys-5' and 'Lys-12' (H4K5acme and H4K12acme, respectively). The sequence is that of Bromodomain-containing protein 2 from Mus musculus (Mouse).